Consider the following 326-residue polypeptide: D-alanine--D-alanine ligase (326 aa).

Residues 112–312 (KRIWRFEGLP…YENLCLGILA (201 aa)) enclose the ATP-grasp domain. 138 to 193 (LQALGAPMIVKPSREGSTIGLTKVWTAEECDQAYVLASRYDPEVLCEEFIEGDETT) is an ATP binding site. D265, E279, and N281 together coordinate Mg(2+).

The protein belongs to the D-alanine--D-alanine ligase family. Requires Mg(2+) as cofactor. The cofactor is Mn(2+).

The protein localises to the cytoplasm. The enzyme catalyses 2 D-alanine + ATP = D-alanyl-D-alanine + ADP + phosphate + H(+). It functions in the pathway cell wall biogenesis; peptidoglycan biosynthesis. Its function is as follows. Cell wall formation. The sequence is that of D-alanine--D-alanine ligase from Delftia acidovorans (strain DSM 14801 / SPH-1).